Consider the following 622-residue polypeptide: MEDRQSRLFLALILSMGIWMGVNYFFFPPTPKKTSETKEVKVDKPSDDKQDQIQKEKKESRTTIPSKGTKIIPSESKKTLVVTESYIVEFSSLGGRISKFYVKDFTGPNGELVQVARKDPETLIVDGKTYYGVELSREKGFDFNFTDSLNELPHSEWNRIPFSLAENKADHSVVFSAFSPDKTYQLKKTFRFFDRENYFKVTVSVINLTKEKLSFASQKNVQYLRTFGSLGPFPKDRPLNDRDTANFFRFYHLDGSFNDTLDGSSSVGFWSSIVNFFTGNSGVDESFSLKTSTGGVDFAGTGSRYFIAVADPLDHKPQGIILDNRPKNESGAVLVYNNITLGPGEVYNLDFASYVGIRESIGMVFHDPELDPSQTKNSPFAGLSSDLNKSFNQGITTPFRNGIIWVLKQIYRFTIPNYGWSIIIFAILFKLVFYPLNQKQAESMKKMQELSPQLKTINEKFANDPKMRQQKTMELYKKNNVNPVGGCLPMVIQIPIFIALYTAFSDTIDLWNSPFLWVKDLSEPDVIWTSPAIPYFTQTGIGLNLLALLMVGTQIFQTRMTSVSMDPNQKMLMYVMPVMMLYIFWNMPSGVTLYWTFQNVLSIGQQWVTNHLKKTEAKKKAV.

Residues 8 to 28 (LFLALILSMGIWMGVNYFFFP) traverse the membrane as a helical segment. Basic and acidic residues predominate over residues 33–61 (KTSETKEVKVDKPSDDKQDQIQKEKKESR). A disordered region spans residues 33 to 70 (KTSETKEVKVDKPSDDKQDQIQKEKKESRTTIPSKGTK). The next 4 membrane-spanning stretches (helical) occupy residues 413–433 (FTIPNYGWSIIIFAILFKLVF), 484–504 (VGGCLPMVIQIPIFIALYTAF), 532–552 (AIPYFTQTGIGLNLLALLMVG), and 571–591 (MLMYVMPVMMLYIFWNMPSGV).

The protein belongs to the OXA1/ALB3/YidC family. Type 1 subfamily. Interacts with the Sec translocase complex via SecD. Specifically interacts with transmembrane segments of nascent integral membrane proteins during membrane integration.

It is found in the cell inner membrane. Required for the insertion and/or proper folding and/or complex formation of integral membrane proteins into the membrane. Involved in integration of membrane proteins that insert both dependently and independently of the Sec translocase complex, as well as at least some lipoproteins. Aids folding of multispanning membrane proteins. In Leptospira borgpetersenii serovar Hardjo-bovis (strain JB197), this protein is Membrane protein insertase YidC.